We begin with the raw amino-acid sequence, 553 residues long: Serine/threonine-protein kinase WNG2 (553 aa).

Disordered stretches follow at residues 1–20 and 88–107; these read MMFP…RLQR and NREP…GGAE. Residues 1–64 form the signal peptide; the sequence is MMFPAVAAPP…GLSWVSVAVA (64 aa). In terms of domain architecture, Protein kinase spans 125–395; that stretch reads FKQLRPVDEF…IGEVMEDPFF (271 aa). Lysine 186 is an ATP binding site. Catalysis depends on aspartate 278, which acts as the Proton acceptor. A disordered region spans residues 432–553; sequence REKADAAAKA…GFNKEDAQES (122 aa). Low complexity predominate over residues 438–451; that stretch reads AAKAADNAEVPAAK. Composition is skewed to basic and acidic residues over residues 465–486, 494–524, and 531–553; these read GDRD…EKGR, EGNH…ENRE, and QREE…AQES.

This sequence belongs to the protein kinase superfamily. STE Ser/Thr protein kinase family. WNG subfamily. It depends on Mg(2+) as a cofactor.

It is found in the cytoplasmic granule. It localises to the secreted. Its subcellular location is the parasitophorous vacuole lumen. The enzyme catalyses L-seryl-[protein] + ATP = O-phospho-L-seryl-[protein] + ADP + H(+). It carries out the reaction L-threonyl-[protein] + ATP = O-phospho-L-threonyl-[protein] + ADP + H(+). In terms of biological role, probable serine/threonine-protein kinase. The polypeptide is Serine/threonine-protein kinase WNG2 (Toxoplasma gondii).